The primary structure comprises 320 residues: Cytochrome f (320 aa).

The N-terminal stretch at Met-1–Ala-35 is a signal peptide. Tyr-36, Cys-56, Cys-59, and His-60 together coordinate heme. Residues Val-286 to Lys-306 form a helical membrane-spanning segment.

This sequence belongs to the cytochrome f family. The 4 large subunits of the cytochrome b6-f complex are cytochrome b6, subunit IV (17 kDa polypeptide, petD), cytochrome f and the Rieske protein, while the 4 small subunits are PetG, PetL, PetM and PetN. The complex functions as a dimer. Heme is required as a cofactor.

Its subcellular location is the plastid. The protein resides in the chloroplast thylakoid membrane. In terms of biological role, component of the cytochrome b6-f complex, which mediates electron transfer between photosystem II (PSII) and photosystem I (PSI), cyclic electron flow around PSI, and state transitions. This Nicotiana sylvestris (Wood tobacco) protein is Cytochrome f.